We begin with the raw amino-acid sequence, 378 residues long: Queuine tRNA-ribosyltransferase (378 aa).

The active-site Proton acceptor is the Asp-90. Residues 90–94 (DSGGY), Asp-152, Gln-194, and Gly-223 each bind substrate. The RNA binding stretch occupies residues 254–260 (GVGKPED). Catalysis depends on Asp-273, which acts as the Nucleophile. The interval 278–282 (TRNAR) is RNA binding; important for wobble base 34 recognition. Positions 311, 313, 316, and 342 each coordinate Zn(2+).

Belongs to the queuine tRNA-ribosyltransferase family. Homodimer. Within each dimer, one monomer is responsible for RNA recognition and catalysis, while the other monomer binds to the replacement base PreQ1. It depends on Zn(2+) as a cofactor.

The catalysed reaction is 7-aminomethyl-7-carbaguanine + guanosine(34) in tRNA = 7-aminomethyl-7-carbaguanosine(34) in tRNA + guanine. Its pathway is tRNA modification; tRNA-queuosine biosynthesis. Its function is as follows. Catalyzes the base-exchange of a guanine (G) residue with the queuine precursor 7-aminomethyl-7-deazaguanine (PreQ1) at position 34 (anticodon wobble position) in tRNAs with GU(N) anticodons (tRNA-Asp, -Asn, -His and -Tyr). Catalysis occurs through a double-displacement mechanism. The nucleophile active site attacks the C1' of nucleotide 34 to detach the guanine base from the RNA, forming a covalent enzyme-RNA intermediate. The proton acceptor active site deprotonates the incoming PreQ1, allowing a nucleophilic attack on the C1' of the ribose to form the product. After dissociation, two additional enzymatic reactions on the tRNA convert PreQ1 to queuine (Q), resulting in the hypermodified nucleoside queuosine (7-(((4,5-cis-dihydroxy-2-cyclopenten-1-yl)amino)methyl)-7-deazaguanosine). The protein is Queuine tRNA-ribosyltransferase of Aquifex aeolicus (strain VF5).